Here is a 156-residue protein sequence, read N- to C-terminus: CD-NTase-associated protein 8 (156 aa).

Belongs to the bacterial HORMA family. HORMA3 subfamily. As to quaternary structure, interacts with Cap7 (also called HORMA2) and CdnC; forms CdnD:Cap7:Cap8 (also called CdnD:HORMA2:HORMA3) complexes with stoichiometries of 1:1:1 and 2:1:1.

Its function is as follows. CBASS (cyclic oligonucleotide-based antiphage signaling system) provides immunity against bacteriophage. The CD-NTase protein synthesizes cyclic nucleotides in response to infection; these serve as specific second messenger signals. The signals activate a diverse range of effectors, leading to bacterial cell death and thus abortive phage infection. A type III-C(AAA) CBASS system. A member of the CBASS system in this bacteria. It does not seem to bind a closure peptide, its exact function is unknown. The sequence is that of CD-NTase-associated protein 8 from Pseudomonas aeruginosa.